A 152-amino-acid polypeptide reads, in one-letter code: Large ribosomal subunit protein uL22 (152 aa).

A compositionally biased stretch (low complexity) spans 124–143; the sequence is APTKAASKKAAPAKQTTPAA. The disordered stretch occupies residues 124–152; it reads APTKAASKKAAPAKQTTPAATESKTEGAE.

Belongs to the universal ribosomal protein uL22 family. In terms of assembly, part of the 50S ribosomal subunit.

This protein binds specifically to 23S rRNA; its binding is stimulated by other ribosomal proteins, e.g. L4, L17, and L20. It is important during the early stages of 50S assembly. It makes multiple contacts with different domains of the 23S rRNA in the assembled 50S subunit and ribosome. In terms of biological role, the globular domain of the protein is located near the polypeptide exit tunnel on the outside of the subunit, while an extended beta-hairpin is found that lines the wall of the exit tunnel in the center of the 70S ribosome. The protein is Large ribosomal subunit protein uL22 of Salinispora arenicola (strain CNS-205).